Consider the following 109-residue polypeptide: UPF0060 membrane protein PA14_21660 (109 aa).

4 helical membrane passes run 5–25 (LWFVLAAFCEIAGCYAFYLWL), 27–47 (LGKSALWVLPGLLSLTLFALL), 59–79 (AYAAYGGIYVAASLFWLAFVE), and 84–104 (LWSDWLGVALCVVGASVVLFG).

The protein belongs to the UPF0060 family.

Its subcellular location is the cell inner membrane. This Pseudomonas aeruginosa (strain UCBPP-PA14) protein is UPF0060 membrane protein PA14_21660.